Here is a 398-residue protein sequence, read N- to C-terminus: Elongation factor Tu (398 aa).

Residues 10 to 207 form the tr-type G domain; the sequence is KIHLNVGTIG…ILDKNIPVPN (198 aa). Positions 19–26 are G1; the sequence is GHVDHGKT. 19 to 26 contacts GTP; that stretch reads GHVDHGKT. Position 26 (T26) interacts with Mg(2+). Positions 60–64 are G2; sequence GITIS. The tract at residues 81-84 is G3; the sequence is DCPG. GTP-binding positions include 81 to 85 and 136 to 139; these read DCPGH and NKAD. The interval 136–139 is G4; it reads NKAD. Residues 174-176 form a G5 region; it reads SAL.

Belongs to the TRAFAC class translation factor GTPase superfamily. Classic translation factor GTPase family. EF-Tu/EF-1A subfamily. Monomer.

The protein localises to the cytoplasm. The enzyme catalyses GTP + H2O = GDP + phosphate + H(+). In terms of biological role, GTP hydrolase that promotes the GTP-dependent binding of aminoacyl-tRNA to the A-site of ribosomes during protein biosynthesis. This Carsonella ruddii (strain PV) protein is Elongation factor Tu.